We begin with the raw amino-acid sequence, 434 residues long: O-phosphoseryl-tRNA(Sec) selenium transferase (434 aa).

The interval 1–40 (MGLNITGLIPKHMENRGKLTLKENLKIIENILEQRKAPEN) is tetramerization. Arg71 is a binding site for pyridoxal 5'-phosphate. A phosphate loop (P-loop) region spans residues 92 to 102 (GRSGNLIDPQP). The substrate site is built by Arg93, Ser94, and Gln101. Position 277 is an N6-(pyridoxal phosphate)lysine (Lys277). Arg306 contributes to the substrate binding site.

This sequence belongs to the SepSecS family. As to quaternary structure, homotetramer. Requires pyridoxal 5'-phosphate as cofactor.

The catalysed reaction is O-phospho-L-seryl-tRNA(Sec) + selenophosphate + H2O = L-selenocysteinyl-tRNA(Sec) + 2 phosphate. Its pathway is aminoacyl-tRNA biosynthesis; selenocysteinyl-tRNA(Sec) biosynthesis; selenocysteinyl-tRNA(Sec) from L-seryl-tRNA(Sec) (archaeal/eukaryal route): step 2/2. In terms of biological role, converts O-phosphoseryl-tRNA(Sec) to selenocysteinyl-tRNA(Sec) required for selenoprotein biosynthesis. This Methanocaldococcus jannaschii (strain ATCC 43067 / DSM 2661 / JAL-1 / JCM 10045 / NBRC 100440) (Methanococcus jannaschii) protein is O-phosphoseryl-tRNA(Sec) selenium transferase (spcS).